The sequence spans 1014 residues: Nebulette (1014 aa).

Residues 1-24 (MRVPVFEDIKDETEEEKIGEEENE) form a disordered region. Residues 9–24 (IKDETEEEKIGEEENE) are compositionally biased toward acidic residues. Nebulin repeat units lie at residues 29-63 (FYKP…KSKD), 64-99 (KCTF…DLSN), 100-136 (SLYK…AKGF), 137-172 (SDYA…DTHT), 173-205 (YSAE…GIMN), 206-241 (KEPA…EMKD), 242-278 (KKHH…NMHD), 279-313 (PVSD…ENKG), 314-348 (MYHF…KNKG), 349-385 (KPML…EIKG), 386-422 (RSSL…EIKG), 423-459 (KGME…IIKG), 460-496 (KGMQ…EIKG), 497-533 (KGMQ…EIKG), 534-569 (KGMQ…KMLS), 570-599 (NYST…KKEV), 600-635 (GAGT…HATA), 636-666 (ISDP…KATP), 667-693 (VSMT…GELQ), 694-728 (RGTA…RATT), 729-759 (LSVT…QMKG), 760-794 (RPSL…KTKG), and 795-830 (RGFT…HIVE). The residue at position 96 (aspartate 96) is an Omega-N-methylarginine. The residue at position 795 (arginine 795) is an Omega-N-methylarginine. The segment at 836 to 953 (GIIVDLKVWR…VSSMRSMQHS (118 aa)) is linker. An SH3 domain is found at 954–1014 (PNLRTYRAMY…LPANYIEFVN (61 aa)).

In terms of assembly, interacts (via nebulin repeats 1-5) with DESM (via rod region). Interacts (via SH3 domain) with XIRP2. Interacts with ZYX/Zyxin. As to expression, abundantly expressed in cardiac muscle, but not in skeletal or smooth muscle. Localized to Z-lines in cardiac cells and to dense bodies in nonmuscle cells. Isoform 2 is expressed in non-muscle cells such as in fibroblasts.

It localises to the cytoplasm. Its function is as follows. Binds to actin and plays an important role in the assembly of the Z-disk. May functionally link sarcomeric actin to the desmin intermediate filaments in the heart muscle sarcomeres. Functionally, may play a role in the assembly of focal adhesions. This is Nebulette from Homo sapiens (Human).